The sequence spans 214 residues: Transmembrane emp24 domain-containing protein p24delta9 (214 aa).

An N-terminal signal peptide occupies residues 1 to 24; it reads MFLRSLNLCTILLFLAISSQVSQS. At 25-181 the chain is on the lumenal side; that stretch reads LHFELQSGRT…QNLNRATNSK (157 aa). The GOLD domain occupies 34–149; sequence TKCISEDIKS…VEVMEFDVKR (116 aa). A coiled-coil region spans residues 164–177; that stretch reads LREREEEMQNLNRA. Arginine 167 carries the post-translational modification Omega-N-methylated arginine. A helical membrane pass occupies residues 182–202; sequence MAWLSFLSLFVCLGVAGMQFV. Over 203-214 the chain is Cytoplasmic; it reads HLKTFFEKKKVI. A COPII vesicle coat-binding motif is present at residues 207-208; the sequence is FF. The COPI vesicle coat-binding signature appears at 207 to 214; the sequence is FFEKKKVI.

This sequence belongs to the EMP24/GP25L family. Probably oligomerizes with other members of the EMP24/GP25L family. Associates with the COPI vesicle coat (coatomer). Associates with the COPII vesicle coat (coatomer).

It is found in the endoplasmic reticulum membrane. The protein localises to the golgi apparatus. It localises to the cis-Golgi network membrane. Its subcellular location is the golgi stack membrane. Functionally, involved in vesicular protein trafficking. Mainly functions in the early secretory pathway. Thought to act as cargo receptor at the lumenal side for incorporation of secretory cargo molecules into transport vesicles and to be involved in vesicle coat formation at the cytoplasmic side. This chain is Transmembrane emp24 domain-containing protein p24delta9, found in Arabidopsis thaliana (Mouse-ear cress).